We begin with the raw amino-acid sequence, 561 residues long: SH3 domain-binding protein 2 (561 aa).

The region spanning 26–130 (GVAKAGYLHK…WMALLRREIG (105 aa)) is the PH domain. 2 disordered regions span residues 160 to 316 (VDIS…GACS) and 333 to 451 (KLKS…YEKV). A compositionally biased stretch (acidic residues) spans 170–188 (DNEDYEHDDEDDSYLEPDS). 2 positions are modified to phosphotyrosine; by SYK: Y174 and Y183. Positions 201-210 (PPAYPPPPVP) match the SH3-binding motif. Pro residues-rich tracts occupy residues 202–213 (PAYPPPPVPTPR) and 233–242 (PLLPPPPPKH). Over residues 252–266 (EDSKRDPLCPRRAEP) the composition is skewed to basic and acidic residues. Phosphoserine is present on S278. Positions 342-354 (RGPPTSEPPPVPA) are enriched in pro residues. Residues S416 and S427 each carry the phosphoserine modification. A Phosphotyrosine; by SYK modification is found at Y448. The 99-residue stretch at 457–555 (VFVNTTESCE…HQSLLLRHPY (99 aa)) folds into the SH2 domain.

In terms of processing, phosphorylated. Phosphorylation at Tyr-448 may stimulate the activity of the LYN kinase. In terms of tissue distribution, expressed in a variety of tissues including lung, liver, skeletal muscle, kidney and pancreas.

Binds differentially to the SH3 domains of certain proteins of signal transduction pathways. Binds to phosphatidylinositols; linking the hemopoietic tyrosine kinase fes to the cytoplasmic membrane in a phosphorylation dependent mechanism. The chain is SH3 domain-binding protein 2 (SH3BP2) from Homo sapiens (Human).